Here is a 620-residue protein sequence, read N- to C-terminus: Long-chain fatty acid transport protein 2 (620 aa).

Residues 1–4 lie on the Lumenal side of the membrane; that stretch reads MLSA. Residues 5 to 27 traverse the membrane as a helical segment; the sequence is IYTVLAGLLFLPLLVNLCCPYFF. At 28–106 the chain is on the cytoplasmic side; that stretch reads QDIGYFLKVA…DHLGLRQGDC (79 aa). The helical transmembrane segment at 107–127 threads the bilayer; sequence VALLMGNEPAYVWLWLGLVKL. The Lumenal segment spans residues 128–261; sequence GCAMACLNYN…SGLKADDVIY (134 aa). Residue 222 to 233 coordinates AMP; it reads YIYTSGTTGLPK. A helical transmembrane segment spans residues 262–282; that stretch reads ITLPFYHSAALLIGIHGCIVA. Topologically, residues 283-620 are cytoplasmic; the sequence is GATLALRTKF…NAISAKTLKL (338 aa). N6-acetyllysine is present on lysine 291. Phosphothreonine is present on threonine 577.

This sequence belongs to the ATP-dependent AMP-binding enzyme family. In terms of tissue distribution, expressed in liver, kidney, placenta, intestine, brain, heart, and colon. Predominantly expressed in liver. Expressed in liver, placenta, and intestine, but much lower relative to isoform 1.

The protein localises to the endoplasmic reticulum membrane. Its subcellular location is the peroxisome membrane. It is found in the cell membrane. The protein resides in the microsome. The enzyme catalyses a fatty acid(in) = a fatty acid(out). It catalyses the reaction (9Z)-octadecenoate(out) = (9Z)-octadecenoate(in). The catalysed reaction is a long-chain fatty acid + ATP + CoA = a long-chain fatty acyl-CoA + AMP + diphosphate. It carries out the reaction (5Z,8Z,11Z,14Z)-eicosatetraenoate + ATP + CoA = (5Z,8Z,11Z,14Z)-eicosatetraenoyl-CoA + AMP + diphosphate. The enzyme catalyses hexadecanoate + ATP + CoA = hexadecanoyl-CoA + AMP + diphosphate. It catalyses the reaction (9Z)-octadecenoate + ATP + CoA = (9Z)-octadecenoyl-CoA + AMP + diphosphate. The catalysed reaction is 3,7,11,15-tetramethylhexadecanoate + ATP + CoA = phytanoyl-CoA + AMP + diphosphate. It carries out the reaction (9Z,12Z,15Z)-octadecatrienoate + ATP + CoA = (9Z,12Z,15Z)-octadecatrienoyl-CoA + AMP + diphosphate. The enzyme catalyses 2,6,10,14-tetramethylpentadecanoate + ATP + CoA = pristanoyl-CoA + AMP + diphosphate. It catalyses the reaction (E)-hexadec-2-enoate + ATP + CoA = (2E)-hexadecenoyl-CoA + AMP + diphosphate. The catalysed reaction is a very long-chain fatty acid + ATP + CoA = a very long-chain fatty acyl-CoA + AMP + diphosphate. It carries out the reaction tetracosanoate + ATP + CoA = tetracosanoyl-CoA + AMP + diphosphate. The enzyme catalyses (4Z,7Z,10Z,13Z,16Z,19Z)-docosahexaenoate + ATP + CoA = (4Z,7Z,10Z,13Z,16Z,19Z)-docosahexaenoyl-CoA + AMP + diphosphate. It catalyses the reaction (25R)-3alpha,7alpha,12alpha-trihydroxy-5beta-cholestan-26-oate + ATP + CoA = (25R)-3alpha,7alpha,12alpha-trihydroxy-5beta-cholestan-26-oyl-CoA + AMP + diphosphate. Mediates the import of long-chain fatty acids (LCFA) into the cell by facilitating their transport across cell membranes, playing an important role in hepatic fatty acid uptake. Also functions as an acyl-CoA ligase catalyzing the ATP-dependent formation of fatty acyl-CoA using LCFA and very-long-chain fatty acids (VLCFA) as substrates, which prevents fatty acid efflux from cells and might drive more fatty acid uptake. Plays a pivotal role in regulating available LCFA substrates from exogenous sources in tissues undergoing high levels of beta-oxidation or triglyceride synthesis. Can also activate branched-chain fatty acids such as phytanic acid and pristanic acid. May contribute to the synthesis of sphingosine-1-phosphate. Does not activate C24 bile acids, cholate and chenodeoxycholate. In vitro, activates 3-alpha,7-alpha,12-alpha-trihydroxy-5-beta-cholestanate (THCA), the C27 precursor of cholic acid deriving from the de novo synthesis from cholesterol. However, it is not critical for THCA activation and bile synthesis in vivo. Functionally, exhibits both long-chain fatty acids (LCFA) transport activity and acyl CoA synthetase towards very long-chain fatty acids. Shows a preference for generating CoA derivatives of n-3 fatty acids, which are preferentially trafficked into phosphatidylinositol. Its function is as follows. Exhibits long-chain fatty acids (LCFA) transport activity but lacks acyl CoA synthetase towards very long-chain fatty acids. The chain is Long-chain fatty acid transport protein 2 (SLC27A2) from Homo sapiens (Human).